The following is a 1025-amino-acid chain: Multidrug resistance protein MdtC (1025 aa).

12 helical membrane passes run 3-23 (FFAL…AITL), 333-353 (EVEQ…FLFL), 360-380 (IIPA…MYLC), 387-407 (LSLM…IVVL), 431-451 (VGFT…PLLL), 463-483 (FAVT…TLTP), 528-548 (LVGA…ISIP), 853-873 (VILI…LYES), 875-895 (VHPL…LLAL), 897-917 (LFNA…IGIV), 953-973 (PIMM…LSGG), and 984-1004 (ITIV…TPVV).

Belongs to the resistance-nodulation-cell division (RND) (TC 2.A.6) family. MdtC subfamily. In terms of assembly, part of a tripartite efflux system composed of MdtA, MdtB and MdtC. MdtC forms a heteromultimer with MdtB.

The protein resides in the cell inner membrane. The MdtABC tripartite complex confers resistance against novobiocin and deoxycholate. This Escherichia coli O81 (strain ED1a) protein is Multidrug resistance protein MdtC.